Consider the following 577-residue polypeptide: MGHAEWIGRTNTAVARSAVGKWFRLEGSGHPRERKGAYFFTELRAGLATFFAMAYIISVNANITSDTGATCVCPAEDLETHCNNNTEYLLCKQEVNRDIVTATAAIASVASFFLGLLANLPVALAPGMGLNAYFAYTVVGHHGSGLIPYSLAVTAVFVEGWIFLGLTMLGIRQWLARAIPASIKLATGAGIGLYLTLIGLSYSAGLGLVQGAQDSPIQLAGCASDEFDSDGLCPSYAKMRNPTMWIGIFCGGFFTVFLMMYRVKGAVIAGILLVSIISWPRTTPVTYFPHTTEGDSMFDFFKKVVTFHPIQHTLVAQDWNISSNGGQFGLALITFLYVDILDATGTLYSMAKFAGAMDERTQDFEGSAMAYTVDAICISIGSLFGSPPVTAFVESGAGISEGGKTGLTSCMTGICFFIAVFFAPIFASIPPWATGSTLVIVGSMMMHATLEINWRYMGDAIPAFLTISVMPFTYSIADGLIAGIISYILINGGVWVIAKCTGGRIVPPNRDDEHEAWTWKIPGGFFPPWLVRAVHGKKDFWRADDEASQLDLGVMPPNGSMSSGSPEQVAEKAVGKY.

Asn62 and Asn84 each carry an N-linked (GlcNAc...) asparagine glycan. 5 helical membrane-spanning segments follow: residues 104-124 (AAIA…PVAL), 151-171 (LAVT…MLGI), 189-209 (AGIG…LGLV), 241-261 (NPTM…LMMY), and 265-285 (GAVI…TTPV). Residue Asn320 is glycosylated (N-linked (GlcNAc...) asparagine). 5 consecutive transmembrane segments (helical) span residues 328-348 (FGLA…GTLY), 373-393 (VDAI…TAFV), 413-433 (GICF…PPWA), 434-454 (TGST…EINW), and 476-496 (IADG…GVWV). A compositionally biased stretch (low complexity) spans 555 to 566 (MPPNGSMSSGSP). Residues 555–577 (MPPNGSMSSGSPEQVAEKAVGKY) form a disordered region. The N-linked (GlcNAc...) asparagine glycan is linked to Asn558.

It belongs to the nucleobase:cation symporter-2 (NCS2) (TC 2.A.40) family. Azg-like subfamily.

The protein resides in the cell membrane. In terms of biological role, efflux pump; part of the gene cluster that mediates the biosynthesis of notoamide, a fungal indole alkaloid that belongs to a family of natural products containing a characteristic bicyclo[2.2.2]diazaoctane core. The sequence is that of Efflux pump notK' from Aspergillus versicolor.